The sequence spans 343 residues: MRN complex-interacting protein (343 aa).

Positions 75 to 104 are disordered; that stretch reads EETVSASEEENVGHQQAGNVKQQEKSQPSE. Residues 87 to 104 show a composition bias toward polar residues; the sequence is GHQQAGNVKQQEKSQPSE. A phosphoserine mark is found at serine 100 and serine 115. 3 disordered regions span residues 128–178, 193–212, and 230–324; these read SKQP…WGPQ, SPCL…RGPG, and AQFV…AQNP. A Nuclear localization signal (NLS) motif is present at residues 148–151; that stretch reads RKRK. Positions 193-202 are enriched in polar residues; it reads SPCLQENSAD. A necessary for the association with the MRN complex region spans residues 213–237; sequence KELWSPIQQVTATSSKWAQFVLPPR. Basic and acidic residues predominate over residues 240–255; it reads SHVDSEQPRSLQRDPR.

The protein belongs to the MRNIP family. As to quaternary structure, associates with the MRE11-RAD50-NBN (MRN) damage-sensing complex; this association is constitutive. Interacts with MRE11. Interacts with NBN. Interacts with RAD50. In terms of processing, phosphorylated; phosphorylation is constitutive and occurs in the absence of any DNA-damaging stimulus. Phosphorylation on Ser-115 is necessary for its nuclear retention.

It is found in the nucleus. The protein resides in the nucleoplasm. Plays a role in the cellular response to DNA damage and the maintenance of genome stability through its association with the MRN damage-sensing complex. Promotes chromatin loading and activity of the MRN complex to facilitate subsequent ATM-mediated DNA damage response signaling and DNA repair. This chain is MRN complex-interacting protein, found in Homo sapiens (Human).